The primary structure comprises 342 residues: Ketol-acid reductoisomerase (NADP(+)) (342 aa).

The KARI N-terminal Rossmann domain occupies 2–181 (VKVYYNGDIK…GGARAGVLET (180 aa)). Residues 25–28 (YGSQ), Arg-48, Ser-52, and 82–85 (DEQQ) each bind NADP(+). His-107 is an active-site residue. Gly-133 provides a ligand contact to NADP(+). The KARI C-terminal knotted domain maps to 182–327 (TFKEETETDL…RKLREMMPFV (146 aa)). 4 residues coordinate Mg(2+): Asp-190, Glu-194, Glu-226, and Glu-230. Substrate is bound at residue Ser-251.

The protein belongs to the ketol-acid reductoisomerase family. The cofactor is Mg(2+).

It catalyses the reaction (2R)-2,3-dihydroxy-3-methylbutanoate + NADP(+) = (2S)-2-acetolactate + NADPH + H(+). The catalysed reaction is (2R,3R)-2,3-dihydroxy-3-methylpentanoate + NADP(+) = (S)-2-ethyl-2-hydroxy-3-oxobutanoate + NADPH + H(+). It participates in amino-acid biosynthesis; L-isoleucine biosynthesis; L-isoleucine from 2-oxobutanoate: step 2/4. The protein operates within amino-acid biosynthesis; L-valine biosynthesis; L-valine from pyruvate: step 2/4. In terms of biological role, involved in the biosynthesis of branched-chain amino acids (BCAA). Catalyzes an alkyl-migration followed by a ketol-acid reduction of (S)-2-acetolactate (S2AL) to yield (R)-2,3-dihydroxy-isovalerate. In the isomerase reaction, S2AL is rearranged via a Mg-dependent methyl migration to produce 3-hydroxy-3-methyl-2-ketobutyrate (HMKB). In the reductase reaction, this 2-ketoacid undergoes a metal-dependent reduction by NADPH to yield (R)-2,3-dihydroxy-isovalerate. This is Ketol-acid reductoisomerase (NADP(+)) from Bacillus subtilis (strain 168).